The following is a 62-amino-acid chain: Keratin-associated protein 6-2 (62 aa).

This sequence belongs to the KRTAP type 6 family. Interacts with hair keratins.

Functionally, in the hair cortex, hair keratin intermediate filaments are embedded in an interfilamentous matrix, consisting of hair keratin-associated proteins (KRTAP), which are essential for the formation of a rigid and resistant hair shaft through their extensive disulfide bond cross-linking with abundant cysteine residues of hair keratins. The matrix proteins include the high-sulfur and high-glycine-tyrosine keratins. In Homo sapiens (Human), this protein is Keratin-associated protein 6-2 (KRTAP6-2).